Reading from the N-terminus, the 300-residue chain is UDP-N-acetylenolpyruvoylglucosamine reductase (300 aa).

In terms of domain architecture, FAD-binding PCMH-type spans 27–192; that stretch reads KVGGPADYLA…ISAKFALKPG (166 aa). Residue arginine 171 is part of the active site. Residue serine 221 is the Proton donor of the active site. The active site involves glutamate 291.

The protein belongs to the MurB family. It depends on FAD as a cofactor.

The protein localises to the cytoplasm. It carries out the reaction UDP-N-acetyl-alpha-D-muramate + NADP(+) = UDP-N-acetyl-3-O-(1-carboxyvinyl)-alpha-D-glucosamine + NADPH + H(+). The protein operates within cell wall biogenesis; peptidoglycan biosynthesis. Functionally, cell wall formation. This is UDP-N-acetylenolpyruvoylglucosamine reductase from Streptococcus agalactiae serotype Ia (strain ATCC 27591 / A909 / CDC SS700).